Here is a 682-residue protein sequence, read N- to C-terminus: T-box brain protein 1 (682 aa).

Disordered regions lie at residues 43-83 (TDNL…RSKL) and 108-127 (SQSS…FPYP). Positions 58-68 (GMTNQSDTDNF) are enriched in polar residues. The segment covering 108-122 (SQSSQPQSAATAPSA) has biased composition (low complexity). The T-box DNA-binding region spans 213–393 (LWLKFHRHQT…HNPFAKGFRD (181 aa)). Position 408 is a phosphothreonine (Thr-408). Ser-410 bears the Phosphoserine mark. 2 disordered regions span residues 447 to 483 (PGAG…SPQR) and 588 to 658 (GLAA…KSEV). A compositionally biased stretch (polar residues) spans 462–472 (PHTNGLLSPQQ). Ser-594 is subject to Phosphoserine. Over residues 619-629 (SSIKSIDSSDS) the composition is skewed to low complexity. Phosphoserine is present on Ser-641.

In terms of assembly, homodimer. Part of a complex containing CASK, TBR1 and TSPYL2; may modulate gene expression in response to neuronal synaptic activity. Interacts with FOXP2. Interacts with FOXP1. Interacts with BCL11A. In terms of tissue distribution, brain.

It is found in the nucleus. Its function is as follows. Transcriptional repressor involved in multiple aspects of cortical development, including neuronal migration, laminar and areal identity, and axonal projection. As transcriptional repressor of FEZF2, it blocks the formation of the corticospinal (CS) tract from layer 6 projection neurons, thereby restricting the origin of CS axons specifically to layer 5 neurons. The polypeptide is T-box brain protein 1 (TBR1) (Homo sapiens (Human)).